Consider the following 290-residue polypeptide: MRIFAGIIFTACCHLLRAFTITAPKDLYVVEYGSNVTMECRFPVERELDLLALVVYWEKEDEQVIQFVAGEEDLKPQHSNFRGRASLPKDQLLKGNAALQITDVKLQDAGVYCCIISYGGADYKRITLKVNAPYRKINQRISVDPATSEHELICQAEGYPEAEVIWTNSDHQPVSGKRSVTTSRTEGMLLNVTSSLRVNATANDVFYCTFWRSQPGQNHTAELIIPELPATHPPQNRTHWVLLGSILLFLIVVSTVLLFLRKQVRMLDVEKCGVEDTSSKNRNDTQFEET.

The N-terminal stretch at 1-18 (MRIFAGIIFTACCHLLRA) is a signal peptide. The Ig-like V-type domain occupies 19 to 127 (FTITAPKDLY…YGGADYKRIT (109 aa)). The Extracellular portion of the chain corresponds to 19 to 239 (FTITAPKDLY…ATHPPQNRTH (221 aa)). N-linked (GlcNAc...) asparagine glycosylation occurs at asparagine 35. Cystine bridges form between cysteine 40–cysteine 114 and cysteine 154–cysteine 208. In terms of domain architecture, Ig-like C2-type spans 133-224 (PYRKINQRIS…PGQNHTAELI (92 aa)). 4 N-linked (GlcNAc...) asparagine glycosylation sites follow: asparagine 191, asparagine 199, asparagine 218, and asparagine 236. The chain crosses the membrane as a helical span at residues 240-260 (WVLLGSILLFLIVVSTVLLFL). The Cytoplasmic segment spans residues 261 to 290 (RKQVRMLDVEKCGVEDTSSKNRNDTQFEET).

It belongs to the immunoglobulin superfamily. BTN/MOG family. Interacts with PDCD1. Interacts with CMTM4 and CMTM6. Interacts with CD80. Post-translationally, ubiquitinated; STUB1 likely mediates polyubiquitination of PD-L1/CD274 triggering its degradation. Ubiquitinated by MARCHF8; leading to degradation. Deubiquitinated by USP22; leading to stabilization. As to expression, highly expressed in the heart, thymus, skeletal muscle, and lung. Weakly expressed in the kidney, spleen, thyroid, and liver. Expressed on activated dendritic cells, B-cells and macrophages. Expressed in numerous tumor cells lines of lymphoid origin.

The protein resides in the cell membrane. It localises to the early endosome membrane. Its subcellular location is the recycling endosome membrane. Its function is as follows. Plays a critical role in induction and maintenance of immune tolerance to self. As a ligand for the inhibitory receptor PDCD1/PD-1, modulates the activation threshold of T-cells and limits T-cell effector response. Through a yet unknown activating receptor, may costimulate T-cell subsets that predominantly produce interleukin-10 (IL10). Functionally, the PDCD1-mediated inhibitory pathway is exploited by tumors to attenuate anti-tumor immunity and escape destruction by the immune system, thereby facilitating tumor survival. The interaction with PDCD1/PD-1 inhibits cytotoxic T lymphocytes (CTLs) effector function. The blockage of the PDCD1-mediated pathway results in the reversal of the exhausted T-cell phenotype and the normalization of the anti-tumor response, providing a rationale for cancer immunotherapy. The polypeptide is Programmed cell death 1 ligand 1 (Cd274) (Mus musculus (Mouse)).